Here is a 388-residue protein sequence, read N- to C-terminus: Succinate--CoA ligase [ADP-forming] subunit beta (388 aa).

The region spanning 9 to 245 is the ATP-grasp domain; sequence KELLAGYGLP…KSQENERELK (237 aa). ATP-binding positions include K46, 53–55, E100, Y103, and E108; that span reads GRG. The Mg(2+) site is built by N200 and D214. Substrate-binding positions include N265 and 322–324; that span reads GIV.

This sequence belongs to the succinate/malate CoA ligase beta subunit family. Heterotetramer of two alpha and two beta subunits. Mg(2+) is required as a cofactor.

It carries out the reaction succinate + ATP + CoA = succinyl-CoA + ADP + phosphate. The catalysed reaction is GTP + succinate + CoA = succinyl-CoA + GDP + phosphate. The protein operates within carbohydrate metabolism; tricarboxylic acid cycle; succinate from succinyl-CoA (ligase route): step 1/1. Succinyl-CoA synthetase functions in the citric acid cycle (TCA), coupling the hydrolysis of succinyl-CoA to the synthesis of either ATP or GTP and thus represents the only step of substrate-level phosphorylation in the TCA. The beta subunit provides nucleotide specificity of the enzyme and binds the substrate succinate, while the binding sites for coenzyme A and phosphate are found in the alpha subunit. The sequence is that of Succinate--CoA ligase [ADP-forming] subunit beta from Neisseria meningitidis serogroup C (strain 053442).